The following is a 106-amino-acid chain: Large ribosomal subunit protein uL24 (106 aa).

The protein belongs to the universal ribosomal protein uL24 family. As to quaternary structure, part of the 50S ribosomal subunit.

In terms of biological role, one of two assembly initiator proteins, it binds directly to the 5'-end of the 23S rRNA, where it nucleates assembly of the 50S subunit. One of the proteins that surrounds the polypeptide exit tunnel on the outside of the subunit. The polypeptide is Large ribosomal subunit protein uL24 (Polaromonas naphthalenivorans (strain CJ2)).